Reading from the N-terminus, the 369-residue chain is LIM homeobox transcription factor 1-beta (369 aa).

2 LIM zinc-binding domains span residues Cys-23 to Asp-73 and Cys-82 to Asp-135. The tract at residues Leu-143–Gln-196 is disordered. Positions Pro-186 to Ala-245 form a DNA-binding region, homeobox.

Interacts with DHX9.

The protein localises to the nucleus. In terms of biological role, transcription factor involved in the regulation of podocyte-expressed genes. Essential for the specification of dorsal limb fate at both the zeugopodal and autopodal levels. This chain is LIM homeobox transcription factor 1-beta (LMX1B), found in Mesocricetus auratus (Golden hamster).